The following is a 357-amino-acid chain: D-amino-acid oxidase (357 aa).

Alanine 13, glycine 14, serine 42, glycine 47, arginine 289, glycine 315, and glycine 318 together coordinate FAD. Arginine 289 contacts D-proline. D-serine is bound at residue arginine 289.

Belongs to the DAMOX/DASOX family. It depends on FAD as a cofactor.

It localises to the cytoplasm. Its subcellular location is the secreted. It is found in the cell wall. The catalysed reaction is a D-alpha-amino acid + O2 + H2O = a 2-oxocarboxylate + H2O2 + NH4(+). It catalyses the reaction D-phenylalanine + O2 + H2O = 3-phenylpyruvate + H2O2 + NH4(+). The enzyme catalyses D-lysine + O2 + H2O = 6-amino-2-oxohexanoate + H2O2 + NH4(+). It carries out the reaction D-methionine + O2 + H2O = 4-methylsulfanyl-2-oxobutanoate + H2O2 + NH4(+). The catalysed reaction is D-arginine + O2 + H2O = 5-guanidino-2-oxopentanoate + H2O2 + NH4(+). It catalyses the reaction D-ornithine + O2 + H2O = 5-amino-2-oxopentanoate + H2O2 + NH4(+). The enzyme catalyses D-leucine + O2 + H2O = 4-methyl-2-oxopentanoate + H2O2 + NH4(+). It carries out the reaction D-histidine + O2 + H2O = 3-(imidazol-5-yl)pyruvate + H2O2 + NH4(+). With respect to regulation, activated by manganese, copper, and iron ions. Inhibited by barium, aluminum, and zinc ions. Its function is as follows. Catalyzes the oxidative deamination of D-amino acids with broad substrate specificity. This is D-amino-acid oxidase from Unknown prokaryotic organism.